Here is a 200-residue protein sequence, read N- to C-terminus: Imidazoleglycerol-phosphate dehydratase (200 aa).

This sequence belongs to the imidazoleglycerol-phosphate dehydratase family.

The protein localises to the cytoplasm. The catalysed reaction is D-erythro-1-(imidazol-4-yl)glycerol 3-phosphate = 3-(imidazol-4-yl)-2-oxopropyl phosphate + H2O. Its pathway is amino-acid biosynthesis; L-histidine biosynthesis; L-histidine from 5-phospho-alpha-D-ribose 1-diphosphate: step 6/9. The chain is Imidazoleglycerol-phosphate dehydratase from Renibacterium salmoninarum (strain ATCC 33209 / DSM 20767 / JCM 11484 / NBRC 15589 / NCIMB 2235).